Here is a 259-residue protein sequence, read N- to C-terminus: MIKIIVAGFKGRMGSTATQMVLETADFELVGVYDPHEAQETVSFNDETAIPVFQRLEEVLAVKPDVWIDFTVPEAAYPNTRFALEHGMAPVVGTTGFTEEQINELTNLSREKAIGGLIAPNFAIGAVLMMQFAQKAAQYFPDVEIIELHHDNKLDAPSGTAIKTAEMIQEVRPAKKQGNPQEVESIPGARGADFEGLRIHSVRLPGLVAHQQVQFGSVGEGLTIRHDSYDRRSFMTGVALACRQVVQRTELLYGLEQML.

NAD(+) contacts are provided by residues 8-13 (GFKGRM), 93-95 (GTT), and 119-122 (APNF). Residue His-149 is the Proton donor/acceptor of the active site. His-150 is a (S)-2,3,4,5-tetrahydrodipicolinate binding site. Lys-153 acts as the Proton donor in catalysis. 159–160 (GT) serves as a coordination point for (S)-2,3,4,5-tetrahydrodipicolinate.

It belongs to the DapB family.

The protein resides in the cytoplasm. It catalyses the reaction (S)-2,3,4,5-tetrahydrodipicolinate + NAD(+) + H2O = (2S,4S)-4-hydroxy-2,3,4,5-tetrahydrodipicolinate + NADH + H(+). It carries out the reaction (S)-2,3,4,5-tetrahydrodipicolinate + NADP(+) + H2O = (2S,4S)-4-hydroxy-2,3,4,5-tetrahydrodipicolinate + NADPH + H(+). Its pathway is amino-acid biosynthesis; L-lysine biosynthesis via DAP pathway; (S)-tetrahydrodipicolinate from L-aspartate: step 4/4. Functionally, catalyzes the conversion of 4-hydroxy-tetrahydrodipicolinate (HTPA) to tetrahydrodipicolinate. The polypeptide is 4-hydroxy-tetrahydrodipicolinate reductase (Enterococcus faecalis (strain ATCC 700802 / V583)).